We begin with the raw amino-acid sequence, 1770 residues long: Transposon Ty2-OR2 Gag-Pol polyprotein (1770 aa).

2 disordered regions span residues 1–88 (MESQ…YQQH) and 359–449 (QHSE…SNDE). 2 stretches are compositionally biased toward polar residues: residues 19–39 (ASVT…SASN) and 49–60 (KVNSQEETTPGT). An RNA-binding region spans residues 295–397 (ENNINVSDRL…SSKPRAAKAH (103 aa)). The span at 369–381 (TSPNTTNTKVTTR) shows a compositional bias: low complexity. 2 stretches are compositionally biased toward polar residues: residues 399 to 408 (IATSSKFSRV) and 415 to 435 (ESTV…GQQQ). Residue Asp-457 is the For protease activity; shared with dimeric partner of the active site. The interval 579–636 (NVNKSKSVNKYPYPLIHRMLGHANFRSIQKSLKKNAVTYLKESDIEWSNASTYQCPDC) is integrase-type zinc finger-like. Positions 656 to 831 (ESYEPFQYLH…AGLDITTILP (176 aa)) constitute an Integrase catalytic domain. 2 residues coordinate Mg(2+): Asp-667 and Asp-732. 4 disordered regions span residues 1005–1038 (GGTI…MIDL), 1057–1135 (GGTE…KSSK), 1146–1165 (LPLP…VSKD), and 1170–1205 (HSRQ…TEIE). Composition is skewed to polar residues over residues 1009 to 1024 (ESDT…FTAR) and 1065 to 1082 (QRNS…STPS). Positions 1151–1165 (LTHKSPTDTSDVSKD) are enriched in basic and acidic residues. The short motif at 1193 to 1227 (KKRSLEDNETEIEVSRDTWNNKNMRSLEPPRSKKR) is the Bipartite nuclear localization signal element. The region spanning 1353–1491 (NDYYITQLDI…DILGLEIKYQ (139 aa)) is the Reverse transcriptase Ty1/copia-type domain. Asp-1361, Asp-1442, Asp-1443, Asp-1625, Glu-1667, and Asp-1700 together coordinate Mg(2+). The RNase H Ty1/copia-type domain occupies 1625–1767 (DASYGNQPYY…IKTFKLLTNK (143 aa)).

In terms of assembly, the capsid protein forms a homotrimer, from which the VLPs are assembled. The protease is a homodimer, whose active site consists of two apposed aspartic acid residues. Initially, virus-like particles (VLPs) are composed of the structural unprocessed proteins Gag and Gag-Pol, and also contain the host initiator methionine tRNA (tRNA(i)-Met) which serves as a primer for minus-strand DNA synthesis, and a dimer of genomic Ty RNA. Processing of the polyproteins occurs within the particle and proceeds by an ordered pathway, called maturation. First, the protease (PR) is released by autocatalytic cleavage of the Gag-Pol polyprotein, and this cleavage is a prerequisite for subsequent processing at the remaining sites to release the mature structural and catalytic proteins. Maturation takes place prior to the RT reaction and is required to produce transposition-competent VLPs.

It localises to the cytoplasm. The protein resides in the nucleus. The enzyme catalyses DNA(n) + a 2'-deoxyribonucleoside 5'-triphosphate = DNA(n+1) + diphosphate. It catalyses the reaction Endonucleolytic cleavage to 5'-phosphomonoester.. Functionally, capsid protein (CA) is the structural component of the virus-like particle (VLP), forming the shell that encapsulates the retrotransposons dimeric RNA genome. The particles are assembled from trimer-clustered units and there are holes in the capsid shells that allow for the diffusion of macromolecules. CA also has nucleocapsid-like chaperone activity, promoting primer tRNA(i)-Met annealing to the multipartite primer-binding site (PBS), dimerization of Ty2 RNA and initiation of reverse transcription. Its function is as follows. The aspartyl protease (PR) mediates the proteolytic cleavages of the Gag and Gag-Pol polyproteins after assembly of the VLP. In terms of biological role, reverse transcriptase/ribonuclease H (RT) is a multifunctional enzyme that catalyzes the conversion of the retro-elements RNA genome into dsDNA within the VLP. The enzyme displays a DNA polymerase activity that can copy either DNA or RNA templates, and a ribonuclease H (RNase H) activity that cleaves the RNA strand of RNA-DNA heteroduplexes during plus-strand synthesis and hydrolyzes RNA primers. The conversion leads to a linear dsDNA copy of the retrotransposon that includes long terminal repeats (LTRs) at both ends. Integrase (IN) targets the VLP to the nucleus, where a subparticle preintegration complex (PIC) containing at least integrase and the newly synthesized dsDNA copy of the retrotransposon must transit the nuclear membrane. Once in the nucleus, integrase performs the integration of the dsDNA into the host genome. This is Transposon Ty2-OR2 Gag-Pol polyprotein (TY2B-OR2) from Saccharomyces cerevisiae (strain ATCC 204508 / S288c) (Baker's yeast).